The sequence spans 226 residues: Ribonuclease 3 (226 aa).

Residues 4-127 enclose the RNase III domain; sequence LEEFEKKLGY…VMGAIYLEKG (124 aa). Glu40 lines the Mg(2+) pocket. Asp44 is a catalytic residue. Residues Asn113 and Glu116 each contribute to the Mg(2+) site. Glu116 is a catalytic residue. Residues 154 to 223 enclose the DRBM domain; sequence DFKTALQEFT…AKEALKILKA (70 aa).

Belongs to the ribonuclease III family. As to quaternary structure, homodimer. Mg(2+) is required as a cofactor.

The protein resides in the cytoplasm. It carries out the reaction Endonucleolytic cleavage to 5'-phosphomonoester.. Its function is as follows. Digests double-stranded RNA. Involved in the processing of primary rRNA transcript to yield the immediate precursors to the large and small rRNAs (23S and 16S). Processes some mRNAs, and tRNAs when they are encoded in the rRNA operon. Processes pre-crRNA and tracrRNA of type II CRISPR loci if present in the organism. The sequence is that of Ribonuclease 3 from Nitratiruptor sp. (strain SB155-2).